A 519-amino-acid chain; its full sequence is Cytosol aminopeptidase (519 aa).

Serine 42 carries the post-translational modification Phosphoserine. Lysine 45 is subject to N6-succinyllysine. At serine 54 the chain carries Phosphoserine. Lysine 61 and lysine 103 each carry N6-succinyllysine. Serine 180 and serine 194 each carry phosphoserine. Zn(2+)-binding residues include leucine 202, methionine 203, and threonine 205. Lysine 221 is subject to N6-acetyllysine; alternate. Residue lysine 221 is modified to N6-succinyllysine; alternate. Serine 238 carries the post-translational modification Phosphoserine. The Zn(2+) site is built by lysine 282 and aspartate 287. Residues lysine 282, aspartate 287, serine 292, and lysine 294 each coordinate substrate. Aspartate 287 provides a ligand contact to Mg(2+). Lysine 294 is an active-site residue. Residues arginine 303, aspartate 305, aspartate 364, and glutamate 366 each contribute to the Zn(2+) site. Residues aspartate 305 and aspartate 364 each coordinate substrate. 2 residues coordinate Mg(2+): aspartate 364 and glutamate 366. The active site involves arginine 368. An N6-acetyllysine; alternate modification is found at lysine 455. Lysine 455 bears the N6-succinyllysine; alternate mark. Lysine 476 carries the N6-succinyllysine modification. An N6-acetyllysine; alternate modification is found at lysine 489. At lysine 489 the chain carries N6-succinyllysine; alternate.

Belongs to the peptidase M17 family. In terms of assembly, homohexamer. Requires Zn(2+) as cofactor. Mn(2+) serves as cofactor.

Its subcellular location is the cytoplasm. It catalyses the reaction Release of an N-terminal amino acid, Xaa-|-Yaa-, in which Xaa is preferably Leu, but may be other amino acids including Pro although not Arg or Lys, and Yaa may be Pro. Amino acid amides and methyl esters are also readily hydrolyzed, but rates on arylamides are exceedingly low.. The catalysed reaction is an S-substituted L-cysteinylglycine + H2O = an S-substituted L-cysteine + glycine. The enzyme catalyses L-cysteinylglycine + H2O = L-cysteine + glycine. It carries out the reaction S-benzyl-L-cysteinylglycine + H2O = S-benzyl-L-cysteine + glycine. It catalyses the reaction Release of N-terminal proline from a peptide.. In terms of biological role, cytosolic metallopeptidase that catalyzes the removal of unsubstituted N-terminal hydrophobic amino acids from various peptides. The presence of Zn(2+) ions is essential for the peptidase activity, and the association with other cofactors can modulate the substrate spectificity of the enzyme. For instance, in the presence of Mn(2+), it displays a specific Cys-Gly hydrolyzing activity of Cys-Gly-S-conjugates. Involved in the metabolism of glutathione and in the degradation of glutathione S-conjugates, which may play a role in the control of the cell redox status. This Sus scrofa (Pig) protein is Cytosol aminopeptidase.